Consider the following 181-residue polypeptide: NADH-quinone oxidoreductase subunit I (181 aa).

4Fe-4S ferredoxin-type domains lie at 51-80 and 90-119; these read TRNSNGSERCVACNLCSAVCPVNCISLKKS and KSFQINLSRCIFCGLCEEACPTMAIQLTPD. Residues C60, C63, C66, C70, C99, C102, C105, and C109 each contribute to the [4Fe-4S] cluster site.

The protein belongs to the complex I 23 kDa subunit family. In terms of assembly, NDH-1 is composed of 13 different subunits. Subunits NuoA, H, J, K, L, M, N constitute the membrane sector of the complex. [4Fe-4S] cluster serves as cofactor.

The protein resides in the cell membrane. The catalysed reaction is a quinone + NADH + 5 H(+)(in) = a quinol + NAD(+) + 4 H(+)(out). Functionally, NDH-1 shuttles electrons from NADH, via FMN and iron-sulfur (Fe-S) centers, to quinones in the respiratory chain. The immediate electron acceptor for the enzyme in this species is believed to be ubiquinone. Couples the redox reaction to proton translocation (for every two electrons transferred, four hydrogen ions are translocated across the cytoplasmic membrane), and thus conserves the redox energy in a proton gradient. In Buchnera aphidicola subsp. Cinara cedri (strain Cc), this protein is NADH-quinone oxidoreductase subunit I.